The chain runs to 155 residues: SsrA-binding protein (155 aa).

The protein belongs to the SmpB family.

The protein resides in the cytoplasm. Required for rescue of stalled ribosomes mediated by trans-translation. Binds to transfer-messenger RNA (tmRNA), required for stable association of tmRNA with ribosomes. tmRNA and SmpB together mimic tRNA shape, replacing the anticodon stem-loop with SmpB. tmRNA is encoded by the ssrA gene; the 2 termini fold to resemble tRNA(Ala) and it encodes a 'tag peptide', a short internal open reading frame. During trans-translation Ala-aminoacylated tmRNA acts like a tRNA, entering the A-site of stalled ribosomes, displacing the stalled mRNA. The ribosome then switches to translate the ORF on the tmRNA; the nascent peptide is terminated with the 'tag peptide' encoded by the tmRNA and targeted for degradation. The ribosome is freed to recommence translation, which seems to be the essential function of trans-translation. The sequence is that of SsrA-binding protein from Moorella thermoacetica (strain ATCC 39073 / JCM 9320).